A 192-amino-acid chain; its full sequence is Small ribosomal subunit protein eS7 (192 aa).

It belongs to the eukaryotic ribosomal protein eS7 family.

The protein is Small ribosomal subunit protein eS7 (RpS7) of Anopheles gambiae (African malaria mosquito).